The sequence spans 326 residues: tRNA(Ile)-lysidine synthase (326 aa).

23-28 (SGGVDS) lines the ATP pocket.

It belongs to the tRNA(Ile)-lysidine synthase family.

It localises to the cytoplasm. It carries out the reaction cytidine(34) in tRNA(Ile2) + L-lysine + ATP = lysidine(34) in tRNA(Ile2) + AMP + diphosphate + H(+). Ligates lysine onto the cytidine present at position 34 of the AUA codon-specific tRNA(Ile) that contains the anticodon CAU, in an ATP-dependent manner. Cytidine is converted to lysidine, thus changing the amino acid specificity of the tRNA from methionine to isoleucine. The protein is tRNA(Ile)-lysidine synthase of Wolinella succinogenes (strain ATCC 29543 / DSM 1740 / CCUG 13145 / JCM 31913 / LMG 7466 / NCTC 11488 / FDC 602W) (Vibrio succinogenes).